Reading from the N-terminus, the 116-residue chain is Holo-[acyl-carrier-protein] synthase (116 aa).

Mg(2+) is bound by residues Asp-8 and Glu-59.

It belongs to the P-Pant transferase superfamily. AcpS family. The cofactor is Mg(2+).

The protein localises to the cytoplasm. The enzyme catalyses apo-[ACP] + CoA = holo-[ACP] + adenosine 3',5'-bisphosphate + H(+). Its function is as follows. Transfers the 4'-phosphopantetheine moiety from coenzyme A to a Ser of acyl-carrier-protein. The sequence is that of Holo-[acyl-carrier-protein] synthase from Staphylococcus saprophyticus subsp. saprophyticus (strain ATCC 15305 / DSM 20229 / NCIMB 8711 / NCTC 7292 / S-41).